We begin with the raw amino-acid sequence, 294 residues long: Bifunctional protein FolD 1 (294 aa).

Residues 165-167 (GRS), S190, and T231 each bind NADP(+).

Belongs to the tetrahydrofolate dehydrogenase/cyclohydrolase family. As to quaternary structure, homodimer.

It carries out the reaction (6R)-5,10-methylene-5,6,7,8-tetrahydrofolate + NADP(+) = (6R)-5,10-methenyltetrahydrofolate + NADPH. The enzyme catalyses (6R)-5,10-methenyltetrahydrofolate + H2O = (6R)-10-formyltetrahydrofolate + H(+). It functions in the pathway one-carbon metabolism; tetrahydrofolate interconversion. Its function is as follows. Catalyzes the oxidation of 5,10-methylenetetrahydrofolate to 5,10-methenyltetrahydrofolate and then the hydrolysis of 5,10-methenyltetrahydrofolate to 10-formyltetrahydrofolate. The chain is Bifunctional protein FolD 1 from Paenarthrobacter aurescens (strain TC1).